Reading from the N-terminus, the 405-residue chain is Probable tRNA sulfurtransferase (405 aa).

Residues 60-165 (TAVMDRLKGV…LNGVFLSGQT (106 aa)) enclose the THUMP domain. ATP-binding positions include 183–184 (ML), 208–209 (HF), Arg265, Gly287, and Gln296.

The protein belongs to the ThiI family.

Its subcellular location is the cytoplasm. It catalyses the reaction [ThiI sulfur-carrier protein]-S-sulfanyl-L-cysteine + a uridine in tRNA + 2 reduced [2Fe-2S]-[ferredoxin] + ATP + H(+) = [ThiI sulfur-carrier protein]-L-cysteine + a 4-thiouridine in tRNA + 2 oxidized [2Fe-2S]-[ferredoxin] + AMP + diphosphate. The enzyme catalyses [ThiS sulfur-carrier protein]-C-terminal Gly-Gly-AMP + S-sulfanyl-L-cysteinyl-[cysteine desulfurase] + AH2 = [ThiS sulfur-carrier protein]-C-terminal-Gly-aminoethanethioate + L-cysteinyl-[cysteine desulfurase] + A + AMP + 2 H(+). It functions in the pathway cofactor biosynthesis; thiamine diphosphate biosynthesis. In terms of biological role, catalyzes the ATP-dependent transfer of a sulfur to tRNA to produce 4-thiouridine in position 8 of tRNAs, which functions as a near-UV photosensor. Also catalyzes the transfer of sulfur to the sulfur carrier protein ThiS, forming ThiS-thiocarboxylate. This is a step in the synthesis of thiazole, in the thiamine biosynthesis pathway. The sulfur is donated as persulfide by IscS. In Levilactobacillus brevis (strain ATCC 367 / BCRC 12310 / CIP 105137 / JCM 1170 / LMG 11437 / NCIMB 947 / NCTC 947) (Lactobacillus brevis), this protein is Probable tRNA sulfurtransferase.